The chain runs to 399 residues: Ubiquitin-like modifier-activating enzyme 5 (399 aa).

ATP-binding residues include Gly76, Asp97, Lys120, Asn143, and Asn177. 2 residues coordinate Zn(2+): Cys219 and Cys222. Cys243 acts as the Glycyl thioester intermediate in catalysis. Positions 296 and 301 each coordinate Zn(2+).

It belongs to the ubiquitin-activating E1 family. UBA5 subfamily.

In terms of biological role, E1-like enzyme which activates UFM1. In Drosophila mojavensis (Fruit fly), this protein is Ubiquitin-like modifier-activating enzyme 5.